The primary structure comprises 333 residues: Glyceraldehyde-3-phosphate dehydrogenase (333 aa).

Residue Ser1 is modified to N-acetylserine. NAD(+)-binding positions include 10–11, Asp31, and Met76; that span reads RI. Residues 147–149, Thr178, 207–208, and Arg230 each bind D-glyceraldehyde 3-phosphate; these read SCT and TG. Cys148 serves as the catalytic Nucleophile. Position 312 (Asn312) interacts with NAD(+).

This sequence belongs to the glyceraldehyde-3-phosphate dehydrogenase family. As to quaternary structure, homotetramer.

The protein localises to the cytoplasm. The catalysed reaction is D-glyceraldehyde 3-phosphate + phosphate + NAD(+) = (2R)-3-phospho-glyceroyl phosphate + NADH + H(+). It participates in carbohydrate degradation; glycolysis; pyruvate from D-glyceraldehyde 3-phosphate: step 1/5. This chain is Glyceraldehyde-3-phosphate dehydrogenase, found in Panulirus versicolor (Painted spiny lobster).